Reading from the N-terminus, the 468-residue chain is Glutamate--tRNA ligase 2 (468 aa).

The 'HIGH' region signature appears at 9 to 19 (PSPTGFLHIGG). The 'KMSKS' region motif lies at 238-242 (KLSKR). Lysine 241 lines the ATP pocket.

It belongs to the class-I aminoacyl-tRNA synthetase family. Glutamate--tRNA ligase type 1 subfamily. As to quaternary structure, monomer.

The protein resides in the cytoplasm. It carries out the reaction tRNA(Glu) + L-glutamate + ATP = L-glutamyl-tRNA(Glu) + AMP + diphosphate. Its function is as follows. Catalyzes the attachment of glutamate to tRNA(Glu) in a two-step reaction: glutamate is first activated by ATP to form Glu-AMP and then transferred to the acceptor end of tRNA(Glu). The polypeptide is Glutamate--tRNA ligase 2 (Rhodospirillum centenum (strain ATCC 51521 / SW)).